The primary structure comprises 203 residues: dITP/XTP pyrophosphatase (203 aa).

8-13 lines the substrate pocket; the sequence is SNNAGK. The Mg(2+) site is built by aspartate 40 and aspartate 69. Aspartate 69 (proton acceptor) is an active-site residue. Substrate contacts are provided by residues serine 70, 152-155, lysine 175, and 180-181; these read FGYD and HR.

The protein belongs to the HAM1 NTPase family. As to quaternary structure, homodimer. Requires Mg(2+) as cofactor.

It catalyses the reaction XTP + H2O = XMP + diphosphate + H(+). It carries out the reaction dITP + H2O = dIMP + diphosphate + H(+). The enzyme catalyses ITP + H2O = IMP + diphosphate + H(+). Its function is as follows. Pyrophosphatase that catalyzes the hydrolysis of nucleoside triphosphates to their monophosphate derivatives, with a high preference for the non-canonical purine nucleotides XTP (xanthosine triphosphate), dITP (deoxyinosine triphosphate) and ITP. Seems to function as a house-cleaning enzyme that removes non-canonical purine nucleotides from the nucleotide pool, thus preventing their incorporation into DNA/RNA and avoiding chromosomal lesions. The protein is dITP/XTP pyrophosphatase of Nitrosomonas europaea (strain ATCC 19718 / CIP 103999 / KCTC 2705 / NBRC 14298).